The primary structure comprises 127 residues: Major sperm protein isoform alpha (127 aa).

Residue alanine 2 is modified to N-acetylalanine. Positions 9–126 constitute an MSP domain; the sequence is DINTQPSQKI…RRKNLPIEYN (118 aa).

Forms filaments 10 nm wide, with a characteristic substructure repeating axially at 9 nm. In terms of tissue distribution, sperm.

The protein resides in the cell projection. It localises to the pseudopodium. The protein localises to the cytoplasm. It is found in the cytoskeleton. Central component in molecular interactions underlying sperm crawling. Forms an extensive filament system that extends from sperm villipoda, along the leading edge of the pseudopod. The sequence is that of Major sperm protein isoform alpha from Ascaris suum (Pig roundworm).